Consider the following 313-residue polypeptide: Serine/threonine-protein phosphatase PP2A-4 catalytic subunit (313 aa).

Residues aspartate 61, histidine 63, aspartate 89, and asparagine 121 each coordinate Mn(2+). The active-site Proton donor is histidine 122. Mn(2+) contacts are provided by histidine 171 and histidine 245. The residue at position 313 (leucine 313) is a Leucine methyl ester.

This sequence belongs to the PPP phosphatase family. PP-2A subfamily. As to quaternary structure, PP2A consists of a common heterodimeric core enzyme, composed of a 36 kDa catalytic subunit (subunit C) and a 65 kDa constant regulatory subunit (subunit A), that associates with a variety of regulatory subunits such as subunits B (the R2/B/PR55/B55, R3/B''/PR72/PR130/PR59 and R5/B'/B56 families). Interacts with SIC/RON3. Mn(2+) serves as cofactor. Reversibly methyl esterified on Leu-313 by leucine carboxyl methyltransferase 1 (LCMT1) and pectin methylesterase 1 (PME1). Carboxyl methylation influences the affinity of the catalytic subunit for the different regulatory subunits, thereby modulating the PP2A holoenzyme's substrate specificity, enzyme activity and cellular localization. Post-translationally, phosphorylation of either threonine (by autophosphorylation-activated protein kinase) or tyrosine results in inactivation of the phosphatase. Auto-dephosphorylation has been suggested as a mechanism for reactivation.

The protein resides in the cytoplasm. It carries out the reaction O-phospho-L-seryl-[protein] + H2O = L-seryl-[protein] + phosphate. The catalysed reaction is O-phospho-L-threonyl-[protein] + H2O = L-threonyl-[protein] + phosphate. Its function is as follows. Functions redundantly with PP2A3, and is involved in establishing auxin gradients, apical-basal axis of polarity and root and shoot apical meristem during embryogenesis. May dephosphorylate PIN1 and regulate its subcellular distribution for polar auxin transport. The holoenzyme composed of PP2AA1, PP2A4 and B'ZETA or B'ETA acts as a negative regulator of plant innate immunity by controlling BAK1 phosphorylation state and activation in surface-localized immune receptor complexes. The sequence is that of Serine/threonine-protein phosphatase PP2A-4 catalytic subunit from Arabidopsis thaliana (Mouse-ear cress).